The primary structure comprises 150 residues: Ribonuclease H (150 aa).

The RNase H type-1 domain maps to 7 to 148 (ESNIVEIWTD…ADQLATKARM (142 aa)). Asp16, Glu54, Asp76, and Asp140 together coordinate Mg(2+).

Belongs to the RNase H family. In terms of assembly, monomer. Mg(2+) is required as a cofactor.

It is found in the cytoplasm. It catalyses the reaction Endonucleolytic cleavage to 5'-phosphomonoester.. Endonuclease that specifically degrades the RNA of RNA-DNA hybrids. This Granulibacter bethesdensis (strain ATCC BAA-1260 / CGDNIH1) protein is Ribonuclease H.